Here is a 283-residue protein sequence, read N- to C-terminus: Putative UTP--glucose-1-phosphate uridylyltransferase (283 aa).

Belongs to the UDPGP type 2 family.

The catalysed reaction is alpha-D-glucose 1-phosphate + UTP + H(+) = UDP-alpha-D-glucose + diphosphate. This chain is Putative UTP--glucose-1-phosphate uridylyltransferase, found in Methanocaldococcus jannaschii (strain ATCC 43067 / DSM 2661 / JAL-1 / JCM 10045 / NBRC 100440) (Methanococcus jannaschii).